Consider the following 448-residue polypeptide: Phosphoglucosamine mutase (448 aa).

S101 acts as the Phosphoserine intermediate in catalysis. 4 residues coordinate Mg(2+): S101, D242, D244, and D246. S101 is subject to Phosphoserine.

It belongs to the phosphohexose mutase family. Requires Mg(2+) as cofactor. Post-translationally, activated by phosphorylation.

It carries out the reaction alpha-D-glucosamine 1-phosphate = D-glucosamine 6-phosphate. In terms of biological role, catalyzes the conversion of glucosamine-6-phosphate to glucosamine-1-phosphate. The protein is Phosphoglucosamine mutase of Nitrobacter winogradskyi (strain ATCC 25391 / DSM 10237 / CIP 104748 / NCIMB 11846 / Nb-255).